Here is a 240-residue protein sequence, read N- to C-terminus: Homeobox protein goosecoid (240 aa).

A DNA-binding region (homeobox) is located at residues 146–205 (KRRHRTIFTDEQLEALENLFQETKYPDVGTREQLARKVHLREEKVEVWFKNRRAKWRRQK). The disordered stretch occupies residues 199–240 (AKWRRQKRSSSEESENSQKWNKSTKTTSEKIEEGKSDVDSDS). Residues 225 to 240 (TSEKIEEGKSDVDSDS) show a composition bias toward basic and acidic residues.

The protein belongs to the paired homeobox family. Bicoid subfamily.

The protein localises to the nucleus. In Danio rerio (Zebrafish), this protein is Homeobox protein goosecoid (gsc).